A 469-amino-acid polypeptide reads, in one-letter code: 3-isopropylmalate dehydratase large subunit (469 aa).

Residues C347, C410, and C413 each contribute to the [4Fe-4S] cluster site.

It belongs to the aconitase/IPM isomerase family. LeuC type 1 subfamily. As to quaternary structure, heterodimer of LeuC and LeuD. [4Fe-4S] cluster serves as cofactor.

The catalysed reaction is (2R,3S)-3-isopropylmalate = (2S)-2-isopropylmalate. Its pathway is amino-acid biosynthesis; L-leucine biosynthesis; L-leucine from 3-methyl-2-oxobutanoate: step 2/4. Catalyzes the isomerization between 2-isopropylmalate and 3-isopropylmalate, via the formation of 2-isopropylmaleate. In Burkholderia orbicola (strain MC0-3), this protein is 3-isopropylmalate dehydratase large subunit.